The primary structure comprises 164 residues: NADH-quinone oxidoreductase subunit B (164 aa).

[4Fe-4S] cluster-binding residues include Cys38, Cys39, Cys104, and Cys133.

It belongs to the complex I 20 kDa subunit family. As to quaternary structure, NDH-1 is composed of 14 different subunits. Subunits NuoB, C, D, E, F, and G constitute the peripheral sector of the complex. [4Fe-4S] cluster serves as cofactor.

It localises to the cell inner membrane. It catalyses the reaction a quinone + NADH + 5 H(+)(in) = a quinol + NAD(+) + 4 H(+)(out). In terms of biological role, NDH-1 shuttles electrons from NADH, via FMN and iron-sulfur (Fe-S) centers, to quinones in the respiratory chain. The immediate electron acceptor for the enzyme in this species is believed to be ubiquinone. Couples the redox reaction to proton translocation (for every two electrons transferred, four hydrogen ions are translocated across the cytoplasmic membrane), and thus conserves the redox energy in a proton gradient. The polypeptide is NADH-quinone oxidoreductase subunit B (Protochlamydia amoebophila (strain UWE25)).